The primary structure comprises 186 residues: Astacin-like metalloprotease toxin 5 (186 aa).

The region spanning 1 to 186 (NAVKYDQQLW…CHSKRKAELL (186 aa)) is the Peptidase M12A domain. Intrachain disulfides connect Cys-42–Cys-177 and Cys-63–Cys-84. Zn(2+) is bound at residue His-92. Glu-93 is a catalytic residue. His-96 and His-102 together coordinate Zn(2+). The N-linked (GlcNAc...) asparagine glycan is linked to Asn-122.

Monomer. The cofactor is Zn(2+). Expressed by the venom gland.

The protein resides in the secreted. With respect to regulation, inhibited by 1,10-phenanthroline. Functionally, zinc metalloprotease. Provoques deadhesion of endothelial cells from cell cultures, and also degradation of fibronectin, fibrinogen and gelatin in vitro. Its role in the venom is not fully understood but it might act as a spreading factor that facilitates diffusion of other venom toxins. Alternatively, it might be involved in the proteolytic processing of other venom toxins or it might play a role in extra-oral digestion of prey. This is Astacin-like metalloprotease toxin 5 from Loxosceles gaucho (Spider).